Consider the following 308-residue polypeptide: D-alanine--D-alanine ligase (308 aa).

One can recognise an ATP-grasp domain in the interval 105-302 (KAIFKALGLD…FPELCERILD (198 aa)). Position 133–188 (133–188 (DLPFGVPCVVKPAGEGSSVGVQIVKDAARLADACREAARYKGDVVVERYVKGTEVN)) interacts with ATP. The Mg(2+) site is built by D256, E269, and N271.

Belongs to the D-alanine--D-alanine ligase family. Mg(2+) serves as cofactor. The cofactor is Mn(2+).

It is found in the cytoplasm. The enzyme catalyses 2 D-alanine + ATP = D-alanyl-D-alanine + ADP + phosphate + H(+). It functions in the pathway cell wall biogenesis; peptidoglycan biosynthesis. Functionally, cell wall formation. The protein is D-alanine--D-alanine ligase of Anaeromyxobacter sp. (strain Fw109-5).